Here is a 441-residue protein sequence, read N- to C-terminus: 3'-N-debenzoyl-2'-deoxytaxol N-benzoyltransferase (441 aa).

Residues histidine 163 and aspartate 373 each act as proton acceptor in the active site.

It belongs to the plant acyltransferase family.

The enzyme catalyses 3'-N-debenzoyltaxol + benzoyl-CoA = paclitaxel + CoA + H(+). It functions in the pathway alkaloid biosynthesis; taxol biosynthesis. Its function is as follows. Catalyzes the stereoselective coupling of the surrogate substrate N-debenzoyl-(3'RS)-2'-deoxytaxol with benzoyl-CoA to form predominantly one 3'-epimer of 2'-deoxytaxol. This enzymatic reaction constitutes the final acylation in the taxol biosynthetic pathway. In Taxus canadensis (Canadian yew), this protein is 3'-N-debenzoyl-2'-deoxytaxol N-benzoyltransferase.